Here is a 287-residue protein sequence, read N- to C-terminus: Glucose import system permease protein GlcU (287 aa).

7 helical membrane passes run 14-34 (HYLA…AMLI), 76-96 (IIVI…AYFF), 113-133 (VLFS…LLPL), 149-169 (IIFA…SMFI), 194-214 (IVFP…IIQA), 218-238 (FFIP…IAVL), and 250-270 (DTFA…VFLG). The ABC transmembrane type-1 domain occupies 71 to 269 (LINSLIIVIP…IIPLAIFVFL (199 aa)).

The protein belongs to the binding-protein-dependent transport system permease family. The complex is composed of two ATP-binding proteins (GlcV), two transmembrane proteins (GlcT and GlcU) and a solute-binding protein (GlcS).

Its subcellular location is the cell membrane. Functionally, part of the ABC transporter complex GlcSTUV involved in glucose uptake. Responsible for the translocation of the substrate across the membrane. In Saccharolobus solfataricus (strain ATCC 35092 / DSM 1617 / JCM 11322 / P2) (Sulfolobus solfataricus), this protein is Glucose import system permease protein GlcU.